The sequence spans 428 residues: Glutamate-1-semialdehyde 2,1-aminomutase (428 aa).

Lys267 bears the N6-(pyridoxal phosphate)lysine mark.

The protein belongs to the class-III pyridoxal-phosphate-dependent aminotransferase family. HemL subfamily. As to quaternary structure, homodimer. Requires pyridoxal 5'-phosphate as cofactor.

Its subcellular location is the cytoplasm. The catalysed reaction is (S)-4-amino-5-oxopentanoate = 5-aminolevulinate. It functions in the pathway porphyrin-containing compound metabolism; protoporphyrin-IX biosynthesis; 5-aminolevulinate from L-glutamyl-tRNA(Glu): step 2/2. This chain is Glutamate-1-semialdehyde 2,1-aminomutase, found in Flavobacterium psychrophilum (strain ATCC 49511 / DSM 21280 / CIP 103535 / JIP02/86).